A 264-amino-acid chain; its full sequence is MKQYLELMKKVLDEGTPKNDRTGTGTLSIFGHQMRFNLQEGFPLVTTKRCHLRSIIHELLWFLQGDTNVAYLRENNVSIWDEWADENGNLGPVYGHQWRAWPTPDGRHIDQITTVLNQLKNDPDSRRIIVSAWNVGELDKMALAPCHAFFQFYVADGKLSCQLYQRSCDVFLGLPFNIASYALLVHMMAQQCDLEVGDFVWTGGDTHLYSNHMEQTHLQLTREPRALPKLVIKRKPESIFDYRFEDFEIEGYDPHPGIKAPVAI.

Arg21 contacts dUMP. (6R)-5,10-methylene-5,6,7,8-tetrahydrofolate is bound at residue His51. Position 126 to 127 (Arg126 to Arg127) interacts with dUMP. Catalysis depends on Cys146, which acts as the Nucleophile. DUMP contacts are provided by residues Arg166–Asp169, Asn177, and His207–Tyr209. A (6R)-5,10-methylene-5,6,7,8-tetrahydrofolate-binding site is contributed by Asp169. Ala263 contributes to the (6R)-5,10-methylene-5,6,7,8-tetrahydrofolate binding site.

It belongs to the thymidylate synthase family. Bacterial-type ThyA subfamily. In terms of assembly, homodimer.

The protein resides in the cytoplasm. The catalysed reaction is dUMP + (6R)-5,10-methylene-5,6,7,8-tetrahydrofolate = 7,8-dihydrofolate + dTMP. Its pathway is pyrimidine metabolism; dTTP biosynthesis. In terms of biological role, catalyzes the reductive methylation of 2'-deoxyuridine-5'-monophosphate (dUMP) to 2'-deoxythymidine-5'-monophosphate (dTMP) while utilizing 5,10-methylenetetrahydrofolate (mTHF) as the methyl donor and reductant in the reaction, yielding dihydrofolate (DHF) as a by-product. This enzymatic reaction provides an intracellular de novo source of dTMP, an essential precursor for DNA biosynthesis. This Enterobacter sp. (strain 638) protein is Thymidylate synthase.